The following is a 182-amino-acid chain: Large ribosomal subunit protein uL6 (182 aa).

This sequence belongs to the universal ribosomal protein uL6 family. Part of the 50S ribosomal subunit.

Functionally, this protein binds to the 23S rRNA, and is important in its secondary structure. It is located near the subunit interface in the base of the L7/L12 stalk, and near the tRNA binding site of the peptidyltransferase center. In Carboxydothermus hydrogenoformans (strain ATCC BAA-161 / DSM 6008 / Z-2901), this protein is Large ribosomal subunit protein uL6.